The following is a 477-amino-acid chain: V-type proton ATPase subunit B (477 aa).

Position 365 (Arg365) interacts with ATP.

It belongs to the ATPase alpha/beta chains family. In terms of assembly, V-ATPase is a heteromultimeric enzyme composed of a peripheral catalytic V1 complex (components A to H) attached to an integral membrane V0 proton pore complex (components: a, c, c', c'', d, e, f and VOA1).

It localises to the vacuole membrane. In terms of biological role, non-catalytic subunit of the V1 complex of vacuolar(H+)-ATPase (V-ATPase), a multisubunit enzyme composed of a peripheral complex (V1) that hydrolyzes ATP and a membrane integral complex (V0) that translocates protons. V-ATPase is responsible for acidifying and maintaining the pH of intracellular compartments. The polypeptide is V-type proton ATPase subunit B (Encephalitozoon cuniculi (strain GB-M1) (Microsporidian parasite)).